A 154-amino-acid chain; its full sequence is Prefoldin subunit 5 (154 aa).

Ala-2 is modified (N-acetylalanine). The residue at position 42 (Lys-42) is an N6-acetyllysine. Ser-56 is modified (phosphoserine).

This sequence belongs to the prefoldin subunit alpha family. In terms of assembly, heterohexamer of two PFD-alpha type and four PFD-beta type subunits.

It localises to the nucleus. Functionally, binds specifically to cytosolic chaperonin (c-CPN) and transfers target proteins to it. Binds to nascent polypeptide chain and promotes folding in an environment in which there are many competing pathways for nonnative proteins. Represses the transcriptional activity of MYC. The sequence is that of Prefoldin subunit 5 (Pfdn5) from Mus musculus (Mouse).